A 490-amino-acid chain; its full sequence is Protein dead ringer homolog (490 aa).

The segment covering 1 to 33 has biased composition (basic and acidic residues); it reads MVEDQRRQLMEEEDEERRLILEEQRRRMMRADR. Disordered regions lie at residues 1–77 and 106–135; these read MVED…AHID and ITQSPPLTNGSNHDNDHDPYLSHRAAHGGS. A compositionally biased stretch (acidic residues) spans 34–50; sequence DEEEEEEEEEEEEEREE. Residues 51-76 show a composition bias toward basic and acidic residues; the sequence is DDGRRSEDEMREDEPPGRRETSHAHI. Positions 106-117 are enriched in polar residues; it reads ITQSPPLTNGSN. The ARID domain occupies 202–294; that stretch reads DSKRKEFLDD…YLYPYECEKK (93 aa). The segment at 298–369 is disordered; it reads SPSELQSAID…PPRLSPSTSP (72 aa). Basic residues predominate over residues 316–325; sequence PSYHSPHMHP. In terms of domain architecture, REKLES spans 389 to 479; the sequence is AAMLAELAER…GVLYPRGGTR (91 aa).

Its subcellular location is the nucleus. Functionally, transcription factor involved in skeletogenesis and oral ectoderm patterning. The protein is Protein dead ringer homolog (dri) of Strongylocentrotus purpuratus (Purple sea urchin).